Here is a 357-residue protein sequence, read N- to C-terminus: Peptide chain release factor 1 (357 aa).

Glutamine 234 carries the post-translational modification N5-methylglutamine.

The protein belongs to the prokaryotic/mitochondrial release factor family. Post-translationally, methylated by PrmC. Methylation increases the termination efficiency of RF1.

It is found in the cytoplasm. Functionally, peptide chain release factor 1 directs the termination of translation in response to the peptide chain termination codons UAG and UAA. This is Peptide chain release factor 1 from Frankia casuarinae (strain DSM 45818 / CECT 9043 / HFP020203 / CcI3).